Here is a 180-residue protein sequence, read N- to C-terminus: Large ribosomal subunit protein uL6 (180 aa).

The protein belongs to the universal ribosomal protein uL6 family. As to quaternary structure, part of the 50S ribosomal subunit.

Its function is as follows. This protein binds to the 23S rRNA, and is important in its secondary structure. It is located near the subunit interface in the base of the L7/L12 stalk, and near the tRNA binding site of the peptidyltransferase center. The chain is Large ribosomal subunit protein uL6 from Anaeromyxobacter dehalogenans (strain 2CP-1 / ATCC BAA-258).